The chain runs to 248 residues: Transmembrane protein 223 (248 aa).

3 helical membrane-spanning segments follow: residues 46-68, 84-104, and 140-160; these read IFRP…AAVA, LLAI…HFAF, and YGFT…ALLF.

It belongs to the TMEM223 family.

It is found in the mitochondrion inner membrane. Mitochondrial ribosome-associated protein involved in the first steps of cytochrome c oxidase complex (complex IV) biogenesis. Stimulates the translation of MT-CO1 mRNA and is a constituent of early MT-CO1 assembly intermediates. The sequence is that of Transmembrane protein 223 from Danio rerio (Zebrafish).